The primary structure comprises 203 residues: GTP cyclohydrolase-2 (203 aa).

49-53 (RIHSE) provides a ligand contact to GTP. 3 residues coordinate Zn(2+): Cys-54, Cys-65, and Cys-67. GTP is bound by residues Gln-70, 92–94 (EGR), and Thr-114. Asp-126 functions as the Proton acceptor in the catalytic mechanism. The Nucleophile role is filled by Arg-128. Residues Thr-149 and Lys-154 each contribute to the GTP site.

This sequence belongs to the GTP cyclohydrolase II family. The cofactor is Zn(2+).

It carries out the reaction GTP + 4 H2O = 2,5-diamino-6-hydroxy-4-(5-phosphoribosylamino)-pyrimidine + formate + 2 phosphate + 3 H(+). It functions in the pathway cofactor biosynthesis; riboflavin biosynthesis; 5-amino-6-(D-ribitylamino)uracil from GTP: step 1/4. Catalyzes the conversion of GTP to 2,5-diamino-6-ribosylamino-4(3H)-pyrimidinone 5'-phosphate (DARP), formate and pyrophosphate. This chain is GTP cyclohydrolase-2, found in Shewanella sp. (strain W3-18-1).